An 852-amino-acid polypeptide reads, in one-letter code: DNA polymerase kappa (852 aa).

The UmuC domain maps to 102–357; it reads IVHVDMDAFY…LPIRKVSGIG (256 aa). 2 residues coordinate Mg(2+): aspartate 106 and aspartate 197. The disordered stretch occupies residues 252-273; it reads FEDSPPDLQPQGSPFQLNSEEQ. Residues 261–273 are compositionally biased toward polar residues; that stretch reads PQGSPFQLNSEEQ. 2 UBZ4-type zinc fingers span residues 619-649 and 761-791; these read TFIC…DGPS and ALVC…NKGI. The Zn(2+) site is built by cysteine 622, cysteine 625, histidine 640, cysteine 644, cysteine 764, cysteine 767, histidine 782, and cysteine 786. A disordered region spans residues 798-852; it reads SEGNSVKQPKESSRSTDRLQKASGRTKRPGTKTKSSTLKKTKPRDPRHTLDGFFK. Positions 805–817 are enriched in basic and acidic residues; sequence QPKESSRSTDRLQ. Over residues 821–839 the composition is skewed to basic residues; sequence GRTKRPGTKTKSSTLKKTK. The segment covering 840-852 has biased composition (basic and acidic residues); that stretch reads PRDPRHTLDGFFK.

Belongs to the DNA polymerase type-Y family. As to quaternary structure, interacts with PCNA. Interacts with REV1. The cofactor is Mg(2+). Mn(2+) serves as cofactor. In terms of tissue distribution, detected at low levels in heart, brain, lung, liver, kidney and testis.

It localises to the nucleus. It carries out the reaction DNA(n) + a 2'-deoxyribonucleoside 5'-triphosphate = DNA(n+1) + diphosphate. In terms of biological role, DNA polymerase specifically involved in DNA repair. Plays an important role in translesion synthesis, where the normal high-fidelity DNA polymerases cannot proceed and DNA synthesis stalls. Depending on the context, it inserts the correct base, but causes frequent base transitions, transversions and frameshifts. Lacks 3'-5' proofreading exonuclease activity. Forms a Schiff base with 5'-deoxyribose phosphate at abasic sites, but does not have lyase activity. The polypeptide is DNA polymerase kappa (Polk) (Mus musculus (Mouse)).